The primary structure comprises 160 residues: Cytochrome b6-f complex subunit 4 (160 aa).

Transmembrane regions (helical) follow at residues 36-56 (LLYI…GLAV), 95-115 (LLGV…PFPE), and 131-151 (TVFS…ALPI).

The protein belongs to the cytochrome b family. PetD subfamily. As to quaternary structure, the 4 large subunits of the cytochrome b6-f complex are cytochrome b6, subunit IV (17 kDa polypeptide, petD), cytochrome f and the Rieske protein, while the 4 small subunits are petG, petL, petM and petN. The complex functions as a dimer.

The protein localises to the plastid. The protein resides in the chloroplast thylakoid membrane. In terms of biological role, component of the cytochrome b6-f complex, which mediates electron transfer between photosystem II (PSII) and photosystem I (PSI), cyclic electron flow around PSI, and state transitions. This is Cytochrome b6-f complex subunit 4 from Huperzia lucidula (Shining clubmoss).